The chain runs to 453 residues: Allantoinase (453 aa).

Zn(2+)-binding residues include histidine 59, histidine 61, lysine 146, histidine 186, histidine 242, and aspartate 315. Position 146 is an N6-carboxylysine (lysine 146).

This sequence belongs to the metallo-dependent hydrolases superfamily. Allantoinase family. As to quaternary structure, homotetramer. Zn(2+) serves as cofactor. In terms of processing, carboxylation allows a single lysine to coordinate two zinc ions.

It catalyses the reaction (S)-allantoin + H2O = allantoate + H(+). It participates in nitrogen metabolism; (S)-allantoin degradation; allantoate from (S)-allantoin: step 1/1. Functionally, catalyzes the conversion of allantoin (5-ureidohydantoin) to allantoic acid by hydrolytic cleavage of the five-member hydantoin ring. The polypeptide is Allantoinase (Salmonella paratyphi B (strain ATCC BAA-1250 / SPB7)).